The chain runs to 234 residues: Leucyl/phenylalanyl-tRNA--protein transferase (234 aa).

This sequence belongs to the L/F-transferase family.

The protein localises to the cytoplasm. It catalyses the reaction N-terminal L-lysyl-[protein] + L-leucyl-tRNA(Leu) = N-terminal L-leucyl-L-lysyl-[protein] + tRNA(Leu) + H(+). The catalysed reaction is N-terminal L-arginyl-[protein] + L-leucyl-tRNA(Leu) = N-terminal L-leucyl-L-arginyl-[protein] + tRNA(Leu) + H(+). The enzyme catalyses L-phenylalanyl-tRNA(Phe) + an N-terminal L-alpha-aminoacyl-[protein] = an N-terminal L-phenylalanyl-L-alpha-aminoacyl-[protein] + tRNA(Phe). In terms of biological role, functions in the N-end rule pathway of protein degradation where it conjugates Leu, Phe and, less efficiently, Met from aminoacyl-tRNAs to the N-termini of proteins containing an N-terminal arginine or lysine. This Salmonella paratyphi A (strain ATCC 9150 / SARB42) protein is Leucyl/phenylalanyl-tRNA--protein transferase.